Reading from the N-terminus, the 279-residue chain is Biotin synthase (279 aa).

The 231-residue stretch at 2–232 (VRNSRLDICS…NVTIKIAAGR (231 aa)) folds into the Radical SAM core domain. C20, C24, and C27 together coordinate [4Fe-4S] cluster. Residues C96, C156, and K227 each coordinate [2Fe-2S] cluster.

This sequence belongs to the radical SAM superfamily. Biotin synthase family. Homodimer. [4Fe-4S] cluster serves as cofactor. Requires [2Fe-2S] cluster as cofactor.

It carries out the reaction (4R,5S)-dethiobiotin + (sulfur carrier)-SH + 2 reduced [2Fe-2S]-[ferredoxin] + 2 S-adenosyl-L-methionine = (sulfur carrier)-H + biotin + 2 5'-deoxyadenosine + 2 L-methionine + 2 oxidized [2Fe-2S]-[ferredoxin]. Its pathway is cofactor biosynthesis; biotin biosynthesis; biotin from 7,8-diaminononanoate: step 2/2. In terms of biological role, catalyzes the conversion of dethiobiotin (DTB) to biotin by the insertion of a sulfur atom into dethiobiotin via a radical-based mechanism. In Thermotoga neapolitana (strain ATCC 49049 / DSM 4359 / NBRC 107923 / NS-E), this protein is Biotin synthase.